We begin with the raw amino-acid sequence, 231 residues long: Large ribosomal subunit protein uL1 (231 aa).

This sequence belongs to the universal ribosomal protein uL1 family. In terms of assembly, part of the 50S ribosomal subunit.

In terms of biological role, binds directly to 23S rRNA. The L1 stalk is quite mobile in the ribosome, and is involved in E site tRNA release. Protein L1 is also a translational repressor protein, it controls the translation of the L11 operon by binding to its mRNA. In Dechloromonas aromatica (strain RCB), this protein is Large ribosomal subunit protein uL1.